The sequence spans 504 residues: Fumitremorgin C monooxygenase (504 aa).

The chain crosses the membrane as a helical span at residues 12 to 32 (LGVVGASLIVILGIILLFPLG). Cysteine 442 is a heme binding site.

The protein belongs to the cytochrome P450 family. It depends on heme as a cofactor.

The protein resides in the membrane. The enzyme catalyses fumitremorgin C + 2 reduced [NADPH--hemoprotein reductase] + 2 O2 = 12alpha,13alpha-dihydroxyfumitremorgin C + 2 oxidized [NADPH--hemoprotein reductase] + 2 H2O + 2 H(+). Its pathway is mycotoxin biosynthesis. Cytochrome P450 monooxygenase; part of the gene cluster that mediates the biosynthesis of fumitremorgins, indole alkaloids that carry not only intriguing chemical structures, but also interesting biological and pharmacological activities. The biosynthesis of fumitremorgin-type alkaloids begins by condensation of the two amino acids L-tryptophan and L-proline to brevianamide F, catalyzed by the non-ribosomal peptide synthetase ftmA. Brevianamide F is then prenylated by the prenyltransferase ftmPT1/ftmB in the presence of dimethylallyl diphosphate, resulting in the formation of tryprostatin B. The three cytochrome P450 monooxygenases, ftmP450-1/ftmC, ftmP450-2/ftmE and ftmP450-3/FtmG, are responsible for the conversion of tryprostatin B to 6-hydroxytryprostatin B, tryprostatin A to fumitremorgin C and fumitremorgin C to 12,13-dihydroxyfumitremorgin C, respectively. The putative methyltransferase ftmMT/ftmD is expected for the conversion of 6-hydroxytryprostatin B to tryprostatin A. FtmPT2/FtmH catalyzes the prenylation of 12,13-dihydroxyfumitre-morgin C in the presence of dimethylallyl diphosphate, resulting in the formation of fumitremorgin B. Fumitremorgin B is further converted to verruculogen by ftmOx1/ftmF via the insertion of an endoperoxide bond between the two prenyl moieties. In some fungal species, verruculogen is further converted to fumitremorgin A, but the enzymes involved in this step have not been identified yet. The polypeptide is Fumitremorgin C monooxygenase (Aspergillus fumigatus (Neosartorya fumigata)).